The following is a 368-amino-acid chain: Glutamate 5-kinase (368 aa).

Residue Lys-9 coordinates ATP. Substrate-binding residues include Ser-49, Asp-136, and Asn-148. ATP-binding positions include 168–169 (TD) and 210–216 (TGGMMTK). Residues 275 to 353 (AGIITIDDGA…ADIENVLGYE (79 aa)) enclose the PUA domain.

This sequence belongs to the glutamate 5-kinase family.

The protein localises to the cytoplasm. It catalyses the reaction L-glutamate + ATP = L-glutamyl 5-phosphate + ADP. It participates in amino-acid biosynthesis; L-proline biosynthesis; L-glutamate 5-semialdehyde from L-glutamate: step 1/2. In terms of biological role, catalyzes the transfer of a phosphate group to glutamate to form L-glutamate 5-phosphate. The protein is Glutamate 5-kinase of Haemophilus influenzae (strain 86-028NP).